A 526-amino-acid polypeptide reads, in one-letter code: Exodeoxyribonuclease 7 large subunit (526 aa).

Residues alanine 497–phenylalanine 526 form a disordered region.

It belongs to the XseA family. As to quaternary structure, heterooligomer composed of large and small subunits.

Its subcellular location is the cytoplasm. It catalyses the reaction Exonucleolytic cleavage in either 5'- to 3'- or 3'- to 5'-direction to yield nucleoside 5'-phosphates.. Its function is as follows. Bidirectionally degrades single-stranded DNA into large acid-insoluble oligonucleotides, which are then degraded further into small acid-soluble oligonucleotides. The sequence is that of Exodeoxyribonuclease 7 large subunit from Rhizobium etli (strain ATCC 51251 / DSM 11541 / JCM 21823 / NBRC 15573 / CFN 42).